We begin with the raw amino-acid sequence, 41 residues long: Large ribosomal subunit protein bL36 (41 aa).

Residues 1 to 21 form a disordered region; it reads MKIRNSLKSLRGRHRDNQLVR.

Belongs to the bacterial ribosomal protein bL36 family.

The sequence is that of Large ribosomal subunit protein bL36 from Methylobacterium sp. (strain 4-46).